The primary structure comprises 248 residues: Meiotic drive suppressor wtf1 (248 aa).

Residues 30 to 68 form a disordered region; the sequence is LLPEYNSDEESTLPPYSDHARVSNPPNTHRENHSSGTTD. The next 4 membrane-spanning stretches (helical) occupy residues 73–93, 110–130, 152–172, and 186–206; these read FLIK…PAVC, WTLI…SWYF, IPMA…PRVT, and SLAD…VETV.

Belongs to the WTF family. As to quaternary structure, homomer. Interacts with other proteins that exhibit high sequence similarity.

The protein resides in the spore membrane. It localises to the vacuole membrane. Functionally, acts as a suppressor component of the dual wtf meiotic drive system, and can suppress but not confer meiotic drive by compatible poisons. Wtf meiotic drive systems promote unequal transmission of alleles from the parental zygote to progeny spores by encoding a poison and an antidote from the same locus; the poison is trans-acting and forms toxic aggregates in all spores within an ascus, wherease the antidote is spore-specific and targets aggregates for degradation by the vacuole. Meiotic drive by wtf systems therefore lead to poisoning of all progeny that do not inherit the dual poison/antidote allele, or express a compatible antidote. The chain is Meiotic drive suppressor wtf1 from Schizosaccharomyces pombe (Fission yeast).